The primary structure comprises 341 residues: S-adenosylmethionine:tRNA ribosyltransferase-isomerase (341 aa).

It belongs to the QueA family. As to quaternary structure, monomer.

It is found in the cytoplasm. It catalyses the reaction 7-aminomethyl-7-carbaguanosine(34) in tRNA + S-adenosyl-L-methionine = epoxyqueuosine(34) in tRNA + adenine + L-methionine + 2 H(+). Its pathway is tRNA modification; tRNA-queuosine biosynthesis. Functionally, transfers and isomerizes the ribose moiety from AdoMet to the 7-aminomethyl group of 7-deazaguanine (preQ1-tRNA) to give epoxyqueuosine (oQ-tRNA). This Staphylococcus aureus (strain Mu3 / ATCC 700698) protein is S-adenosylmethionine:tRNA ribosyltransferase-isomerase.